We begin with the raw amino-acid sequence, 477 residues long: Glycogen synthase (477 aa).

Lys16 serves as a coordination point for ADP-alpha-D-glucose.

The protein belongs to the glycosyltransferase 1 family. Bacterial/plant glycogen synthase subfamily.

The enzyme catalyses [(1-&gt;4)-alpha-D-glucosyl](n) + ADP-alpha-D-glucose = [(1-&gt;4)-alpha-D-glucosyl](n+1) + ADP + H(+). The protein operates within glycan biosynthesis; glycogen biosynthesis. Its function is as follows. Synthesizes alpha-1,4-glucan chains using ADP-glucose. The chain is Glycogen synthase from Oceanobacillus iheyensis (strain DSM 14371 / CIP 107618 / JCM 11309 / KCTC 3954 / HTE831).